A 170-amino-acid polypeptide reads, in one-letter code: Archaemetzincin (170 aa).

H110 contributes to the Zn(2+) binding site. E111 acts as the Proton acceptor in catalysis. H114, H120, C121, C125, C144, and C147 together coordinate Zn(2+).

This sequence belongs to the peptidase M54 family. In terms of assembly, monomer. The cofactor is Zn(2+).

Its function is as follows. Probable zinc metalloprotease whose natural substrate is unknown. The protein is Archaemetzincin of Nanoarchaeum equitans (strain Kin4-M).